Reading from the N-terminus, the 109-residue chain is Flowering-promoting factor 1-like protein 1 (109 aa).

Positions 73-81 match the D-box motif; it reads RGSLDLISL.

The protein belongs to the FPF1 family. In terms of assembly, interacts with RPT4. Ubiquitinated. RPT4 mediates its proteasome-dependent degradation. As to expression, specifically expressed in the apical meristem, the elongation zone of root tip, steles of the branch zone, and the young lateral root. Also expressed in spikes. Expressed in roots and spikes (at protein level).

Its subcellular location is the cytoplasm. It localises to the nucleus. Its function is as follows. GTP-binding protein that functions in the development of root systems, which are mediated by auxin. Acts as a cell cycle regulator during root development. Proteasome-mediated degradation of the protein is necessary for the transition of metaphase to anaphase in mitosis. This chain is Flowering-promoting factor 1-like protein 1 (RAA1), found in Oryza sativa subsp. japonica (Rice).